The primary structure comprises 473 residues: Glutamate--tRNA ligase (473 aa).

The 'HIGH' region motif lies at P9–G19. Zn(2+) is bound by residues C98, C100, C125, and D127. The 'KMSKS' region signature appears at K237 to R241. Residue K240 coordinates ATP.

Belongs to the class-I aminoacyl-tRNA synthetase family. Glutamate--tRNA ligase type 1 subfamily. In terms of assembly, monomer. Requires Zn(2+) as cofactor.

The protein localises to the cytoplasm. It catalyses the reaction tRNA(Glu) + L-glutamate + ATP = L-glutamyl-tRNA(Glu) + AMP + diphosphate. In terms of biological role, catalyzes the attachment of glutamate to tRNA(Glu) in a two-step reaction: glutamate is first activated by ATP to form Glu-AMP and then transferred to the acceptor end of tRNA(Glu). The polypeptide is Glutamate--tRNA ligase (Sodalis glossinidius (strain morsitans)).